Reading from the N-terminus, the 329-residue chain is Phenylalanine--tRNA ligase alpha subunit (329 aa).

Residue glutamate 254 participates in Mg(2+) binding.

It belongs to the class-II aminoacyl-tRNA synthetase family. Phe-tRNA synthetase alpha subunit type 1 subfamily. As to quaternary structure, tetramer of two alpha and two beta subunits. The cofactor is Mg(2+).

The protein localises to the cytoplasm. It catalyses the reaction tRNA(Phe) + L-phenylalanine + ATP = L-phenylalanyl-tRNA(Phe) + AMP + diphosphate + H(+). This Mannheimia succiniciproducens (strain KCTC 0769BP / MBEL55E) protein is Phenylalanine--tRNA ligase alpha subunit.